Consider the following 674-residue polypeptide: Acyl-coenzyme A oxidase acox-1.1 (674 aa).

FAD-binding positions include Tyr149–Thr152, Gly157–Thr158, and Gly191. Residues Lys285 to Tyr288 and Arg295 contribute to the substrate site. Residues Arg320 and Gln340–Arg343 contribute to the FAD site. ATP contacts are provided by His342, Ser392, His396, and Gln404. Gly411 contributes to the FAD binding site. Substrate is bound at residue Tyr433 to Glu434. The active-site Proton acceptor is the Glu434. Glu436 lines the FAD pocket. ATP is bound by residues Arg533–Arg536 and Tyr581. The short motif at Ser672–Leu674 is the Microbody targeting signal element.

This sequence belongs to the acyl-CoA oxidase family. As to quaternary structure, homodimer. Forms a heterodimer with acox-1.2. Forms a heterodimer with acox-1.3; the interaction may be important for the stability of acox-1.3. Requires FAD as cofactor. Expressed in hypodermis and intestine.

The protein localises to the peroxisome. The enzyme catalyses nonanoyl-CoA + O2 = (2E)-nonenoyl-CoA + H2O2. It carries out the reaction dodecanoyl-CoA + O2 = (2E)-dodecenoyl-CoA + H2O2. The catalysed reaction is a 2,3-saturated acyl-CoA + O2 = a (2E)-enoyl-CoA + H2O2. It catalyses the reaction heptanoyl-CoA + O2 = (2E)-heptenoyl-CoA + H2O2. The enzyme catalyses (8R)-8-hydroxynonanoyl-CoA + O2 = (2E,8R)-8-hydroxynonenoyl-CoA + H2O2. It carries out the reaction pentanoyl-CoA + O2 = (2E)-pentenoyl-CoA + H2O2. The catalysed reaction is hexadecanoyl-CoA + O2 = (2E)-hexadecenoyl-CoA + H2O2. It catalyses the reaction IC-asc-C7-CoA + O2 = IC-asc-DeltaC7-CoA + H2O2. The enzyme catalyses IC-asc-C9-CoA + O2 = IC-asc-DeltaC9-CoA + H2O2. It carries out the reaction asc-omegaC5-CoA + O2 = asc-omegaDeltaC5-CoA + H2O2. The catalysed reaction is asc-C7-CoA + O2 = asc-DeltaC7-CoA + H2O2. It catalyses the reaction asc-omegaC7-CoA + O2 = asc-omegaDeltaC7-CoA + H2O2. The enzyme catalyses asc-C9-CoA + O2 = asc-DeltaC9-CoA + H2O2. It carries out the reaction asc-C13-CoA + O2 = asc-DeltaC13-CoA + H2O2. Its pathway is lipid metabolism; peroxisomal fatty acid beta-oxidation. Its activity is regulated as follows. Activated by ATP. ATP binding leads to a conformational change that promotes FAD cofactor binding and enzyme activity. ATP binding likely occurs during acox-1.1 folding and/or dimer formation. Its function is as follows. Involved in the first step of peroxisomal beta-oxidation by catalyzing the desaturation of fatty acid-derived side chains. Specifically, catalyzes the desaturation of fatty acids heptanoyl-CoA (C7), nonanoyl-CoA (C9), dodecanoyl-CoA (C12) and to a lesser extent pentanoyl-CoA (C5) and hexadecanoyl-CoA (C16), and hydroxylated fatty acid hydroxynonanoyl-CoA. Also, catalyzes the desaturation fatty acid-derived side chains of ascaroside pheromones, which regulates development and behavior. Specifically, shortens ascaroside with 5-carbon omega side chain (asc-omega-C5), 7-carbon side chain (asc-C7), 9-carbon side chain (asc-C9), 11-carbon side chain (asc-C11), 13-carbon side chain (asc-C13), 15-carbon side chain (asc-C15) and to a lesser extent ascarosides with 7-omega-carbon side chain (asc-omega-C7). Also shortens indol-3-carbonyl(IC)-ascarosides with 7-carbon side chain (IC-asc-C7) and to a lesser extent (IC)-ascarosides with 9-carbon side chain (IC-asc-C9). May associate and regulate the folding and/or the catalytic activity of other acyl-coenzyme A oxidases including acox-1.2, acox-1.3, acox-1.4 and acox-3 modulating the type of ascarosides produced. In association with acox-1.3, catalyzes the desaturation of asc-C7-CoA but not of fatty acids or hydroxylated fatty acids. Involved in the biosynthesis of asc-C6-MK (daumone 2) and asc-delta-C9 (daumone 3) but not asc-C7 (daumone 1); daumones are pheromones produced during unfavourable growth conditions which promote entry into the dauer stage. In Caenorhabditis elegans, this protein is Acyl-coenzyme A oxidase acox-1.1.